The sequence spans 100 residues: Large ribosomal subunit protein uL23 (100 aa).

The protein belongs to the universal ribosomal protein uL23 family. In terms of assembly, part of the 50S ribosomal subunit. Contacts protein L29, and trigger factor when it is bound to the ribosome.

Its function is as follows. One of the early assembly proteins it binds 23S rRNA. One of the proteins that surrounds the polypeptide exit tunnel on the outside of the ribosome. Forms the main docking site for trigger factor binding to the ribosome. The protein is Large ribosomal subunit protein uL23 of Parasynechococcus marenigrum (strain WH8102).